The primary structure comprises 434 residues: Enolase (434 aa).

Residues 29–56 (SGHTGRAAVPSGASTGSREALEMRDGDK) form a disordered region. Positions 47–56 (EALEMRDGDK) are enriched in basic and acidic residues. Gln163 provides a ligand contact to (2R)-2-phosphoglycerate. Glu205 serves as the catalytic Proton donor. Mg(2+)-binding residues include Asp242, Glu285, and Asp312. Residues Lys337, Arg366, Ser367, and Lys388 each coordinate (2R)-2-phosphoglycerate. The active-site Proton acceptor is Lys337.

It belongs to the enolase family. In terms of assembly, homooctamer. Mg(2+) is required as a cofactor.

Its subcellular location is the cytoplasm. It is found in the secreted. It localises to the cell surface. It catalyses the reaction (2R)-2-phosphoglycerate = phosphoenolpyruvate + H2O. Its pathway is carbohydrate degradation; glycolysis; pyruvate from D-glyceraldehyde 3-phosphate: step 4/5. Functionally, catalyzes the reversible conversion of 2-phosphoglycerate (2-PG) into phosphoenolpyruvate (PEP). It is essential for the degradation of carbohydrates via glycolysis. The protein is Enolase of Nitratidesulfovibrio vulgaris (strain DSM 19637 / Miyazaki F) (Desulfovibrio vulgaris).